A 386-amino-acid chain; its full sequence is Flap endonuclease 1 (386 aa).

The segment at 1–104 (MGILGLSKLI…GELAKRAERR (104 aa)) is N-domain. Residue Asp-34 participates in Mg(2+) binding. The DNA site is built by Arg-47 and Arg-70. 5 residues coordinate Mg(2+): Asp-86, Glu-158, Glu-160, Asp-179, and Asp-181. An I-domain region spans residues 122–253 (EIEKFNRRLV…KRAIELINNY (132 aa)). Residue Glu-158 coordinates DNA. Residues Gly-231 and Asp-233 each coordinate DNA. Mg(2+) is bound at residue Asp-233. The interval 336-344 (TQVRLDSFF) is interaction with PCNA. The interval 351–386 (PNAVHAAKRKAEEAKKSANNKKAKTSGGAARGRRPK) is disordered.

The protein belongs to the XPG/RAD2 endonuclease family. FEN1 subfamily. As to quaternary structure, interacts with PCNA. Three molecules of FEN1 bind to one PCNA trimer with each molecule binding to one PCNA monomer. PCNA stimulates the nuclease activity without altering cleavage specificity. It depends on Mg(2+) as a cofactor. Post-translationally, phosphorylated. Phosphorylation upon DNA damage induces relocalization to the nuclear plasma.

Its subcellular location is the nucleus. It is found in the nucleolus. The protein localises to the nucleoplasm. It localises to the mitochondrion. Functionally, structure-specific nuclease with 5'-flap endonuclease and 5'-3' exonuclease activities involved in DNA replication and repair. During DNA replication, cleaves the 5'-overhanging flap structure that is generated by displacement synthesis when DNA polymerase encounters the 5'-end of a downstream Okazaki fragment. It enters the flap from the 5'-end and then tracks to cleave the flap base, leaving a nick for ligation. Also involved in the long patch base excision repair (LP-BER) pathway, by cleaving within the apurinic/apyrimidinic (AP) site-terminated flap. Acts as a genome stabilization factor that prevents flaps from equilibrating into structures that lead to duplications and deletions. Also possesses 5'-3' exonuclease activity on nicked or gapped double-stranded DNA, and exhibits RNase H activity. Also involved in replication and repair of rDNA and in repairing mitochondrial DNA. This is Flap endonuclease 1 from Drosophila persimilis (Fruit fly).